Consider the following 171-residue polypeptide: Large ribosomal subunit protein uL10 (171 aa).

Belongs to the universal ribosomal protein uL10 family. In terms of assembly, part of the ribosomal stalk of the 50S ribosomal subunit. The N-terminus interacts with L11 and the large rRNA to form the base of the stalk. The C-terminus forms an elongated spine to which L12 dimers bind in a sequential fashion forming a multimeric L10(L12)X complex.

Forms part of the ribosomal stalk, playing a central role in the interaction of the ribosome with GTP-bound translation factors. In Phenylobacterium zucineum (strain HLK1), this protein is Large ribosomal subunit protein uL10.